A 164-amino-acid polypeptide reads, in one-letter code: ATP synthase subunit b 2 (164 aa).

The chain crosses the membrane as a helical span at residues 4–24 (TFWAFVGLVLFLALLVYFQIP).

The protein belongs to the ATPase B chain family. As to quaternary structure, F-type ATPases have 2 components, F(1) - the catalytic core - and F(0) - the membrane proton channel. F(1) has five subunits: alpha(3), beta(3), gamma(1), delta(1), epsilon(1). F(0) has three main subunits: a(1), b(2) and c(10-14). The alpha and beta chains form an alternating ring which encloses part of the gamma chain. F(1) is attached to F(0) by a central stalk formed by the gamma and epsilon chains, while a peripheral stalk is formed by the delta and b chains.

Its subcellular location is the cell inner membrane. In terms of biological role, f(1)F(0) ATP synthase produces ATP from ADP in the presence of a proton or sodium gradient. F-type ATPases consist of two structural domains, F(1) containing the extramembraneous catalytic core and F(0) containing the membrane proton channel, linked together by a central stalk and a peripheral stalk. During catalysis, ATP synthesis in the catalytic domain of F(1) is coupled via a rotary mechanism of the central stalk subunits to proton translocation. Component of the F(0) channel, it forms part of the peripheral stalk, linking F(1) to F(0). The protein is ATP synthase subunit b 2 of Bartonella tribocorum (strain CIP 105476 / IBS 506).